The primary structure comprises 137 residues: MATFKLEVVTPLKKVLDRDAEMVIMRTIEGDMGVMADHAPFVAELAVGEMKIKSANGEEAYFVSGGFLEISKEKTMILADEAIDVKEIDVERAKREAEIAKETLVKLKEDKDIAVTQKSLQEALTKVRIAEQYMHHL.

The protein belongs to the ATPase epsilon chain family. F-type ATPases have 2 components, CF(1) - the catalytic core - and CF(0) - the membrane proton channel. CF(1) has five subunits: alpha(3), beta(3), gamma(1), delta(1), epsilon(1). CF(0) has three main subunits: a, b and c.

The protein resides in the cell inner membrane. Functionally, produces ATP from ADP in the presence of a sodium gradient across the membrane. This Propionigenium modestum protein is ATP synthase epsilon chain, sodium ion specific (atpC).